Consider the following 713-residue polypeptide: Calpastatin (713 aa).

Disordered regions lie at residues 1–187 (MNPT…LDPM) and 211–506 (DKKE…PVLP). Over residues 21 to 30 (PNKKRHKKQA) the composition is skewed to basic residues. Residue Lys32 forms a Glycyl lysine isopeptide (Lys-Gly) (interchain with G-Cter in SUMO2) linkage. Basic and acidic residues predominate over residues 46–63 (VVHEKKTQEVKPKEHPEP). Lys50 carries the N6-acetyllysine modification. A compositionally biased stretch (polar residues) spans 85–94 (SRSNEQPTSE). Phosphoserine occurs at positions 87 and 134. Thr136 is modified (phosphothreonine). Residues 171–223 (TEEDNTTYTGPEVLDPMSSTYIEELGKREVTLPPKYRELLDKKEGIPVPPPDT) form an Inhibitory domain 1 repeat. A Phosphoserine modification is found at Ser244. 3 stretches are compositionally biased toward basic and acidic residues: residues 248–258 (DGKKTEKEKST), 304–332 (RKSE…KKCG), and 342–367 (YRLK…KPLS). The stretch at 307 to 359 (EPELDLSSIKEIDEAKAKEEKLKKCGEDDETVPPEYRLKPAMDKDGKPLLPEA) is one Inhibitory domain 2 repeat. 3 positions are modified to phosphoserine: Ser367, Ser369, and Ser376. Residues 370 to 379 (ELIDELSEDF) show a composition bias toward acidic residues. Positions 380–397 (DQSKRKEKQSKPTEKTKE) are enriched in basic and acidic residues. Ser441 is subject to Phosphoserine. Basic and acidic residues predominate over residues 443 to 502 (GKKEADPEDGKPVEDKVKEKAKEEDREKLGEKEETIPPDYRLEEVKDKDGKTLPHKDPKE). An Inhibitory domain 3 repeat occupies 447–500 (ADPEDGKPVEDKVKEKAKEEDREKLGEKEETIPPDYRLEEVKDKDGKTLPHKDP). 2 positions are modified to phosphoserine: Ser517 and Ser528. The interval 536–713 (SAAVSEVVSQ…KQKSDGKSTS (178 aa)) is disordered. The segment covering 542–553 (VVSQTSAPTTHS) has biased composition (polar residues). 2 positions are modified to phosphoserine: Ser575 and Ser577. The Inhibitory domain 4 repeat unit spans residues 583–636 (PDPDENKPIEDKVKEKAEAEHRDKLGERDDTIPPEYRHLLDKDEEGKSTKPPTK). Composition is skewed to basic and acidic residues over residues 583–646 (PDPD…KPEA) and 691–713 (KAKD…KSTS).

Belongs to the protease inhibitor I27 (calpastatin) family.

Specific inhibition of calpain (calcium-dependent cysteine protease). Plays a key role in postmortem tenderization of meat and have been proposed to be involved in muscle protein degradation in living tissue. The polypeptide is Calpastatin (CAST) (Sus scrofa (Pig)).